The chain runs to 268 residues: Phosphatidylglycerol--prolipoprotein diacylglyceryl transferase (268 aa).

3 helical membrane passes run 16-36 (FITL…GIWL), 56-76 (IWLV…FNWG), and 92-112 (GIAI…FTYV). Residue Arg-136 coordinates a 1,2-diacyl-sn-glycero-3-phospho-(1'-sn-glycerol). The next 3 membrane-spanning stretches (helical) occupy residues 175-195 (PTFL…LWLF), 204-224 (GTLL…IEGL), and 236-256 (IAQV…FRLY).

Belongs to the Lgt family.

The protein resides in the cell inner membrane. The enzyme catalyses L-cysteinyl-[prolipoprotein] + a 1,2-diacyl-sn-glycero-3-phospho-(1'-sn-glycerol) = an S-1,2-diacyl-sn-glyceryl-L-cysteinyl-[prolipoprotein] + sn-glycerol 1-phosphate + H(+). It functions in the pathway protein modification; lipoprotein biosynthesis (diacylglyceryl transfer). Its function is as follows. Catalyzes the transfer of the diacylglyceryl group from phosphatidylglycerol to the sulfhydryl group of the N-terminal cysteine of a prolipoprotein, the first step in the formation of mature lipoproteins. The protein is Phosphatidylglycerol--prolipoprotein diacylglyceryl transferase of Thermosynechococcus vestitus (strain NIES-2133 / IAM M-273 / BP-1).